A 1166-amino-acid polypeptide reads, in one-letter code: Reverse gyrase (1166 aa).

Residues 1–40 form an RG N-terminal-type zinc finger; it reads MINVMYKNSCPNCGGDISADRLLNGLPCETCLPYINGIDG. C10, C13, C28, and C31 together coordinate Zn(2+). Residues Q92 and 109 to 116 each bind ATP; that span reads APTGLGKT. The Helicase ATP-binding domain maps to 96–285; sequence LRRLVSNQSF…ALRLLTGFEP (190 aa). Residues 190–193 carry the DEAD box motif; it reads DDAD. The interval 576 to 1166 is topoisomerase I; sequence FNISTGLLIV…VNPLKSEQNV (591 aa). Positions 580–743 constitute a Toprim domain; the sequence is TGLLIVESPT…NIYRITYHEI (164 aa). A Mg(2+)-binding site is contributed by E586. The segment at 662–689 adopts an RG C-terminal-type zinc-finger fold; it reads IKKCLDCNKTFSIASDKCPYCGSTNVQT. Positions 665, 668, 679, and 682 each coordinate Zn(2+). D712 serves as a coordination point for Mg(2+). A Topo IA-type catalytic domain is found at 759 to 1157; sequence NTNLVMSQIV…EIFSEISTLV (399 aa). Residue Y903 is the O-(5'-phospho-DNA)-tyrosine intermediate of the active site.

It in the N-terminal section; belongs to the DEAD box helicase family. DDVD subfamily. This sequence in the C-terminal section; belongs to the type IA topoisomerase family. As to quaternary structure, monomer. Zn(2+) is required as a cofactor. Requires Mg(2+) as cofactor.

The protein localises to the cytoplasm. It catalyses the reaction ATP + H2O = ADP + phosphate + H(+). Inhibited by UV light-induced lesions; substrate is completely cleaved but a nicked form accumulates, suggesting the reaction is blocked between the cleavage and ligation steps. Inhibited by actinomycin D; substrate DNA remains negatively supercoiled in this case. Activity is stimulated by SSB from S.solfataricus strain P2. Positive supercoiling is inhibited by Sul7d (also called Sso7d) from S.solfataricus strain MT4; SSB from S.solfataricus strain P2 relieves this inhibition. Functionally, modifies the topological state of DNA by introducing positive supercoils in an ATP-dependent process. Increases the linking number in steps of +1. In vitro requires high concentrations to supercoil negatively supercoiled DNA, relaxes plasmid DNA first; DNA single-strand binding protein (SSB) from S.solfataricus strain P2 stimulates positive supercoiling. SSB stimulates DNA-binding by reverse gyrase, and thus all subsequent steps. Binds to single-stranded DNA, transiently cleaves and then rejoins the ends, introducing a positive supercoil in the process. The scissile phosphodiester is attacked by the catalytic tyrosine of the enzyme, resulting in the formation of a DNA-(5'-phosphotyrosyl)-enzyme intermediate. May be involved in DNA damage response. Probably involved in rewinding DNA strands in regions of the chromosome that have opened up to allow replication, transcription, DNA repair and/or for DNA protection. The polypeptide is Reverse gyrase (Saccharolobus shibatae (strain ATCC 51178 / DSM 5389 / JCM 8931 / NBRC 15437 / B12) (Sulfolobus shibatae)).